The following is a 551-amino-acid chain: Probable glucomannan 4-beta-mannosyltransferase 3 (551 aa).

Residues 60–80 form a helical membrane-spanning segment; that stretch reads ACLALSAMLLADAVLMAAACF. The active site involves D154. Substrate-binding residues include D213 and D215. Residue D307 is part of the active site. 4 helical membrane passes run 386-406, 409-429, 504-524, and 525-545; these read VVAHVVPFMLYCVVIPFSVLI, VTVPVWGVVYVPTTITLLHAI, ILFSIFLFFCATYNLAYGGDY, and YFVYIYLQAIAFLVVGIGFCG.

This sequence belongs to the glycosyltransferase 2 family. Plant cellulose synthase-like A subfamily.

The protein localises to the golgi apparatus membrane. It catalyses the reaction GDP-mannose + (glucomannan)n = GDP + (glucomannan)n+1.. In terms of biological role, probable mannan synthase which consists of a 4-beta-mannosyltransferase activity on mannan using GDP-mannose. The beta-1,4-mannan product is the backbone for galactomannan synthesis by galactomannan galactosyltransferase. Galactomannan is a noncellulosic polysaccharides of plant cell wall. The polypeptide is Probable glucomannan 4-beta-mannosyltransferase 3 (Oryza sativa subsp. japonica (Rice)).